The primary structure comprises 576 residues: Sulfite reductase [NADPH] hemoprotein beta-component (576 aa).

[4Fe-4S] cluster is bound by residues C439, C445, C485, and C489. Residue C489 coordinates siroheme.

This sequence belongs to the nitrite and sulfite reductase 4Fe-4S domain family. As to quaternary structure, alpha(8)-beta(8). The alpha component is a flavoprotein, the beta component is a hemoprotein. It depends on siroheme as a cofactor. [4Fe-4S] cluster is required as a cofactor.

It catalyses the reaction hydrogen sulfide + 3 NADP(+) + 3 H2O = sulfite + 3 NADPH + 4 H(+). Its pathway is sulfur metabolism; hydrogen sulfide biosynthesis; hydrogen sulfide from sulfite (NADPH route): step 1/1. Its function is as follows. Component of the sulfite reductase complex that catalyzes the 6-electron reduction of sulfite to sulfide. This is one of several activities required for the biosynthesis of L-cysteine from sulfate. The sequence is that of Sulfite reductase [NADPH] hemoprotein beta-component from Aliivibrio fischeri (strain ATCC 700601 / ES114) (Vibrio fischeri).